A 241-amino-acid polypeptide reads, in one-letter code: WAP four-disulfide core domain protein 8 (241 aa).

The N-terminal stretch at 1–38 is a signal peptide; that stretch reads MWTVRTEGGHFPLHSPTFSWRNVAFLLLLSLALEWTSA. Residues 44-91 form the WAP 1 domain; sequence IKHKPGLCPKERLTCTTELPDSCNTDFDCKEYQKCCFFACQKKCMDPF. Disulfide bonds link Cys51–Cys79, Cys58–Cys83, Cys66–Cys78, Cys72–Cys87, Cys95–Cys145, Cys104–Cys128, Cys120–Cys141, Cys154–Cys182, Cys165–Cys186, Cys169–Cys181, Cys175–Cys190, Cys201–Cys229, Cys208–Cys232, Cys216–Cys228, and Cys222–Cys236. In terms of domain architecture, BPTI/Kunitz inhibitor spans 95-145; it reads CMLPVRHGNCNHEAQRWHFDFKNYRCTPFKYRGCEGNANNFLNEDACRTAC. WAP domains are found at residues 147–194 and 195–240; these read LIVK…ARAW and TVKK…MDPR.

In terms of tissue distribution, expressed ubiquitously, the highest levels are found in the epididymis followed by testis and trachea.

The protein resides in the secreted. This chain is WAP four-disulfide core domain protein 8 (WFDC8), found in Homo sapiens (Human).